The following is a 362-amino-acid chain: Dihydroorotate dehydrogenase (quinone) (362 aa).

Residues 62–66 and T86 each bind FMN; that span reads AGYDK. Residue K66 coordinates substrate. 111-115 is a substrate binding site; the sequence is NRLGF. FMN is bound by residues N139 and N170. Residue N170 coordinates substrate. Catalysis depends on S173, which acts as the Nucleophile. N175 contacts substrate. The FMN site is built by K215 and S243. 244–245 contributes to the substrate binding site; the sequence is NT. Residues G266, G295, and 316-317 each bind FMN; that span reads YS.

This sequence belongs to the dihydroorotate dehydrogenase family. Type 2 subfamily. As to quaternary structure, monomer. FMN is required as a cofactor.

It localises to the cell membrane. The catalysed reaction is (S)-dihydroorotate + a quinone = orotate + a quinol. The protein operates within pyrimidine metabolism; UMP biosynthesis via de novo pathway; orotate from (S)-dihydroorotate (quinone route): step 1/1. Its function is as follows. Catalyzes the conversion of dihydroorotate to orotate with quinone as electron acceptor. This chain is Dihydroorotate dehydrogenase (quinone), found in Rhizobium johnstonii (strain DSM 114642 / LMG 32736 / 3841) (Rhizobium leguminosarum bv. viciae).